Reading from the N-terminus, the 92-residue chain is Small ribosomal subunit protein uS19c (92 aa).

It belongs to the universal ribosomal protein uS19 family.

The protein resides in the plastid. It localises to the chloroplast. Protein S19 forms a complex with S13 that binds strongly to the 16S ribosomal RNA. This Ceratophyllum demersum (Rigid hornwort) protein is Small ribosomal subunit protein uS19c.